A 233-amino-acid chain; its full sequence is Phosphoribosylaminoimidazole-succinocarboxamide synthase (233 aa).

The protein belongs to the SAICAR synthetase family.

It catalyses the reaction 5-amino-1-(5-phospho-D-ribosyl)imidazole-4-carboxylate + L-aspartate + ATP = (2S)-2-[5-amino-1-(5-phospho-beta-D-ribosyl)imidazole-4-carboxamido]succinate + ADP + phosphate + 2 H(+). The protein operates within purine metabolism; IMP biosynthesis via de novo pathway; 5-amino-1-(5-phospho-D-ribosyl)imidazole-4-carboxamide from 5-amino-1-(5-phospho-D-ribosyl)imidazole-4-carboxylate: step 1/2. This chain is Phosphoribosylaminoimidazole-succinocarboxamide synthase, found in Staphylococcus saprophyticus subsp. saprophyticus (strain ATCC 15305 / DSM 20229 / NCIMB 8711 / NCTC 7292 / S-41).